Here is a 375-residue protein sequence, read N- to C-terminus: ATP phosphoribosyltransferase regulatory subunit (375 aa).

Belongs to the class-II aminoacyl-tRNA synthetase family. HisZ subfamily. As to quaternary structure, heteromultimer composed of HisG and HisZ subunits.

It is found in the cytoplasm. It participates in amino-acid biosynthesis; L-histidine biosynthesis; L-histidine from 5-phospho-alpha-D-ribose 1-diphosphate: step 1/9. Its function is as follows. Required for the first step of histidine biosynthesis. May allow the feedback regulation of ATP phosphoribosyltransferase activity by histidine. In Agrobacterium fabrum (strain C58 / ATCC 33970) (Agrobacterium tumefaciens (strain C58)), this protein is ATP phosphoribosyltransferase regulatory subunit.